The following is a 396-amino-acid chain: Elongation factor Tu (396 aa).

The tr-type G domain maps to 10 to 205 (KPHVNIGTIG…AVDESIPDPV (196 aa)). Positions 19–26 (GHVDHGKT) are G1. 19–26 (GHVDHGKT) is a GTP binding site. T26 provides a ligand contact to Mg(2+). The G2 stretch occupies residues 62–66 (GITIN). The segment at 83 to 86 (DAPG) is G3. Residues 83 to 87 (DAPGH) and 138 to 141 (NKAD) each bind GTP. A G4 region spans residues 138–141 (NKAD). Residues 175–177 (SAL) are G5.

This sequence belongs to the TRAFAC class translation factor GTPase superfamily. Classic translation factor GTPase family. EF-Tu/EF-1A subfamily. As to quaternary structure, monomer.

Its subcellular location is the cytoplasm. It catalyses the reaction GTP + H2O = GDP + phosphate + H(+). Functionally, GTP hydrolase that promotes the GTP-dependent binding of aminoacyl-tRNA to the A-site of ribosomes during protein biosynthesis. In Mycobacterium bovis (strain ATCC BAA-935 / AF2122/97), this protein is Elongation factor Tu.